A 505-amino-acid polypeptide reads, in one-letter code: MASGRRAPRTGLLELRAGTGAGAGGERWQRVLVSLAEDALTVSPADGEPGPEPGAVREPEPAQINGAAEPGAAPPQLPEALLLQRRRVTVRKADAGGLGISIKGGRENKMPILISKIFKGLAADQTEALFVGDAILSVNGEDLSSATHDEAVQALKKTGKEVVLEVKYMKEVSPYFKNSAGGTSVGWDSPPASPLQRQPSSPGPQTRNLSEAKHVPLKMAYVSRRCTPSDPEHRYLEICSADGQDTIFLRAKDEASARSWAGAIQAQINALLPWVKDELQALLAASSPAGSQDIKQIGWLTEQLPSGGTAPTLALLTEKELLLYGGLPQTREALSRPARTAPLIATRLVHSGPSKGSVPYDAELSFALRTGTRHGVDTHLFSVESPQELAAWTRQLVDGCHRAAEGVQEVSTACTWNGRPCNLSVHIDKGFTLWAAEPGAARAVLLRQPFEKLQMSSDDGASLLFLDFGGAEGEIQLDLHSCPKTMVFIIHSFLSAKVTRLGLLA.

Disordered stretches follow at residues 1–24 (MASG…AGAG) and 40–75 (LTVS…AAPP). PH domains follow at residues 6-269 (RAPR…AQIN) and 293-401 (DIKQ…DGCH). A compositionally biased stretch (low complexity) spans 9 to 18 (RTGLLELRAG). One can recognise a PDZ domain in the interval 87-170 (RVTVRKADAG…EVVLEVKYMK (84 aa)). Phosphoserine occurs at positions 101, 184, 189, 193, and 200. The segment at 183 to 212 (TSVGWDSPPASPLQRQPSSPGPQTRNLSEA) is disordered. Polar residues predominate over residues 195-209 (LQRQPSSPGPQTRNL). The 57-residue stretch at 449-505 (PFEKLQMSSDDGASLLFLDFGGAEGEIQLDLHSCPKTMVFIIHSFLSAKVTRLGLLA) folds into the SU domain. The segment at 483–505 (PKTMVFIIHSFLSAKVTRLGLLA) is calmodulin-binding.

The protein belongs to the syntrophin family. As to quaternary structure, monomer and homodimer. Interacts with the dystrophin related protein DTNA; SGCG of the dystrophin glycoprotein complex; NOS1; GRB2; GA; TGFA; MAPK12 and the sodium channel proteins SCN4A and SCN5A. Interacts with the dystrophin protein DMD in a calmodulin dependent manner and with related protein UTRN; SGCA of the dystrophin glycoprotein complex; F-actin; calmodulin and with the other members of the syntrophin family SNTB1 and SNTB2. Interacts with MYOC; regulates muscle hypertrophy. Interacts with DTNB. In terms of processing, phosphorylated by CaM-kinase II. Phosphorylation may inhibit the interaction with DMD. As to expression, highly expressed in skeletal and cardiac muscle and is also detected in brain.

It localises to the cell membrane. It is found in the sarcolemma. The protein resides in the cell junction. The protein localises to the cytoplasm. Its subcellular location is the cytoskeleton. Its function is as follows. Adapter protein that binds to and probably organizes the subcellular localization of a variety of membrane proteins. May link various receptors to the actin cytoskeleton and the extracellular matrix via dystrophin glycoprotein complex. Plays an important role in synapse formation and in the organization of UTRN and acetylcholine receptors at the neuromuscular synapse. Binds to phosphatidylinositol 4,5-bisphosphate. In Oryctolagus cuniculus (Rabbit), this protein is Alpha-1-syntrophin (SNTA1).